A 231-amino-acid chain; its full sequence is 5'-methylthioadenosine/S-adenosylhomocysteine nucleosidase (231 aa).

The Proton acceptor role is filled by glutamate 12. Substrate is bound by residues glycine 78, methionine 153, and 174–175 (ME). Aspartate 198 (proton donor) is an active-site residue.

The protein belongs to the PNP/UDP phosphorylase family. MtnN subfamily.

The enzyme catalyses S-adenosyl-L-homocysteine + H2O = S-(5-deoxy-D-ribos-5-yl)-L-homocysteine + adenine. It catalyses the reaction S-methyl-5'-thioadenosine + H2O = 5-(methylsulfanyl)-D-ribose + adenine. The catalysed reaction is 5'-deoxyadenosine + H2O = 5-deoxy-D-ribose + adenine. Its pathway is amino-acid biosynthesis; L-methionine biosynthesis via salvage pathway; S-methyl-5-thio-alpha-D-ribose 1-phosphate from S-methyl-5'-thioadenosine (hydrolase route): step 1/2. Functionally, catalyzes the irreversible cleavage of the glycosidic bond in both 5'-methylthioadenosine (MTA) and S-adenosylhomocysteine (SAH/AdoHcy) to adenine and the corresponding thioribose, 5'-methylthioribose and S-ribosylhomocysteine, respectively. Also cleaves 5'-deoxyadenosine, a toxic by-product of radical S-adenosylmethionine (SAM) enzymes, into 5-deoxyribose and adenine. This is 5'-methylthioadenosine/S-adenosylhomocysteine nucleosidase from Psychromonas ingrahamii (strain DSM 17664 / CCUG 51855 / 37).